Here is a 316-residue protein sequence, read N- to C-terminus: 1-phosphofructokinase (316 aa).

ATP contacts are provided by residues 225–230 (SMGAGG) and 256–257 (GD). Residue Asp-257 is the Proton acceptor of the active site.

Belongs to the carbohydrate kinase PfkB family.

It carries out the reaction beta-D-fructose 1-phosphate + ATP = beta-D-fructose 1,6-bisphosphate + ADP + H(+). Catalyzes the ATP-dependent phosphorylation of fructose-l-phosphate to fructose-l,6-bisphosphate. This chain is 1-phosphofructokinase, found in Rhodobacter capsulatus (Rhodopseudomonas capsulata).